The following is a 340-amino-acid chain: Glycerol-3-phosphate dehydrogenase [NAD(P)+] (340 aa).

NADPH is bound by residues Ser-14, Trp-15, and Lys-109. The sn-glycerol 3-phosphate site is built by Lys-109, Gly-140, and Ser-142. Ala-144 provides a ligand contact to NADPH. Lys-195, Asp-248, Ser-258, Arg-259, and Asn-260 together coordinate sn-glycerol 3-phosphate. Lys-195 acts as the Proton acceptor in catalysis. Residue Arg-259 participates in NADPH binding. Positions 283 and 285 each coordinate NADPH.

This sequence belongs to the NAD-dependent glycerol-3-phosphate dehydrogenase family.

Its subcellular location is the cytoplasm. The catalysed reaction is sn-glycerol 3-phosphate + NAD(+) = dihydroxyacetone phosphate + NADH + H(+). The enzyme catalyses sn-glycerol 3-phosphate + NADP(+) = dihydroxyacetone phosphate + NADPH + H(+). The protein operates within membrane lipid metabolism; glycerophospholipid metabolism. Its function is as follows. Catalyzes the reduction of the glycolytic intermediate dihydroxyacetone phosphate (DHAP) to sn-glycerol 3-phosphate (G3P), the key precursor for phospholipid synthesis. The sequence is that of Glycerol-3-phosphate dehydrogenase [NAD(P)+] from Syntrophobacter fumaroxidans (strain DSM 10017 / MPOB).